Reading from the N-terminus, the 223-residue chain is Phosphoribosylformylglycinamidine synthase subunit PurQ (223 aa).

Residues 4–223 (KIGVITFPGT…FLSAVGTIAA (220 aa)) enclose the Glutamine amidotransferase type-1 domain. The Nucleophile role is filled by C87. Residues H195 and E197 contribute to the active site.

In terms of assembly, part of the FGAM synthase complex composed of 1 PurL, 1 PurQ and 2 PurS subunits.

The protein localises to the cytoplasm. It carries out the reaction N(2)-formyl-N(1)-(5-phospho-beta-D-ribosyl)glycinamide + L-glutamine + ATP + H2O = 2-formamido-N(1)-(5-O-phospho-beta-D-ribosyl)acetamidine + L-glutamate + ADP + phosphate + H(+). The enzyme catalyses L-glutamine + H2O = L-glutamate + NH4(+). It participates in purine metabolism; IMP biosynthesis via de novo pathway; 5-amino-1-(5-phospho-D-ribosyl)imidazole from N(2)-formyl-N(1)-(5-phospho-D-ribosyl)glycinamide: step 1/2. Part of the phosphoribosylformylglycinamidine synthase complex involved in the purines biosynthetic pathway. Catalyzes the ATP-dependent conversion of formylglycinamide ribonucleotide (FGAR) and glutamine to yield formylglycinamidine ribonucleotide (FGAM) and glutamate. The FGAM synthase complex is composed of three subunits. PurQ produces an ammonia molecule by converting glutamine to glutamate. PurL transfers the ammonia molecule to FGAR to form FGAM in an ATP-dependent manner. PurS interacts with PurQ and PurL and is thought to assist in the transfer of the ammonia molecule from PurQ to PurL. This chain is Phosphoribosylformylglycinamidine synthase subunit PurQ, found in Corynebacterium glutamicum (strain ATCC 13032 / DSM 20300 / JCM 1318 / BCRC 11384 / CCUG 27702 / LMG 3730 / NBRC 12168 / NCIMB 10025 / NRRL B-2784 / 534).